Here is a 757-residue protein sequence, read N- to C-terminus: E3 ubiquitin-protein ligase RNF12-B (757 aa).

A compositionally biased stretch (polar residues) spans 1–10 (MESADSTGKG). Disordered stretches follow at residues 1–29 (MESA…LDRE), 68–519 (LQQI…TYES), and 619–652 (EPAE…GGVT). Over residues 11–21 (STEQSESQRQS) the composition is skewed to low complexity. 2 stretches are compositionally biased toward polar residues: residues 110 to 138 (SVRQ…NPNS) and 147 to 163 (INVN…SLDQ). A run of 21 repeats spans residues 197 to 202 (PESVDE), 203 to 208 (PVSVAE), 209 to 214 (PVSVAE), 215 to 220 (PVSVAE), 221 to 226 (PESVAE), 227 to 232 (PESVAA), 237 to 242 (PESVPE), 243 to 248 (PESVPE), 249 to 254 (PESVPE), 255 to 260 (PESVPE), 261 to 266 (PESVPE), 267 to 272 (PESVPE), 273 to 278 (PESVPE), 279 to 284 (PESVPE), 285 to 290 (PESVPE), 291 to 296 (PESVPE), 297 to 302 (PESVPE), 303 to 308 (PESVPE), 309 to 314 (PESIAE), 315 to 320 (PESVPV), and 321 to 326 (PESVPV). Residues 197 to 326 (PESVDEPVSV…SVPVPESVPV (130 aa)) form a 21 X 6 AA approximate repeats of P-[EV]-S-V-[PA]-[EV] region. Positions 202-237 (EPVSVAEPVSVAEPVSVAEPESVAEPESVAASVPVP) are enriched in low complexity. The span at 245 to 313 (SVPEPESVPE…ESVPEPESIA (69 aa)) shows a compositional bias: acidic residues. Residues 314 to 327 (EPESVPVPESVPVA) show a composition bias toward low complexity. Basic and acidic residues predominate over residues 352–367 (RSPDQRRTRARTDRSR). The span at 383–392 (HSSSQTVDAS) shows a compositional bias: polar residues. Residues 408–424 (SSQVHSSSSNETEGSSR) show a composition bias toward low complexity. Polar residues predominate over residues 428–452 (HITARQQALGTEGQSQSTVHLSNPE). Residues 453-466 (SRSSSQTPQTDSPS) are compositionally biased toward low complexity. The span at 467–476 (NAETTGTGQR) shows a compositional bias: polar residues. The segment covering 490–500 (RPGDYRQRDSI) has biased composition (basic and acidic residues). Residues 501 to 517 (ANRTRSRSQTPNNTVTY) show a composition bias toward polar residues. The segment at 703–744 (CSVCITEYTEGNKLRKLPCSHEYHIHCIDRWLSENSTCPICR) adopts an RING-type; atypical zinc-finger fold. Positions 754 to 757 (ESIV) match the PDZ-binding motif.

Belongs to the RNF12 family. As to quaternary structure, forms homodimers through the C-terminal region. The N-terminus interacts with the homeobox of LIM/homeobox factor lhx1/lim1, with lhx3/lim3 and lhx5/lim5, and with the N-terminus of ldb1. In terms of tissue distribution, shows overlapping expression with lhx1/lim1 and ldb1 in the gastrula mesoderm, and expression overlaps with ldb1 throughout early embryogenesis. After gastrulation, expression is gradually restricted to tissues originated from the ectoderm, the neuroectoderm, neural crest and epidermis, and subsequently to the neural tube as well as the head and tailbud region.

The protein localises to the nucleus. The enzyme catalyses S-ubiquitinyl-[E2 ubiquitin-conjugating enzyme]-L-cysteine + [acceptor protein]-L-lysine = [E2 ubiquitin-conjugating enzyme]-L-cysteine + N(6)-ubiquitinyl-[acceptor protein]-L-lysine.. Its pathway is protein modification; protein ubiquitination. Acts as an E3 ubiquitin-protein ligase specific for ldb1, mediating ubiquitination and proteasome-dependent degradation of excess ldb1 in a RING-dependent manner. Does not degrade ldb1 bound to lhx1/lim1, nor lim1 itself and thus contributes to the establishment of proper ldb1-lhx1/lim1 stoichiometry and the formation of a ldb1-lhx1/lim1 complex. Interferes with Spemann organizer function and suppresses secondary axis formation induced by ldb1 and lhx1/lim1. In Xenopus laevis (African clawed frog), this protein is E3 ubiquitin-protein ligase RNF12-B (rnf12-b).